Consider the following 330-residue polypeptide: uncharacterized protein (330 aa).

The region spanning 96–256 is the JmjC domain; sequence AALEFDFTDL…LMLAALRKKL (161 aa). Residues His145, Asp147, and His224 each contribute to the Fe cation site.

Belongs to the ROX family. Requires Fe(2+) as cofactor.

This is an uncharacterized protein from Bacillus subtilis (strain 168).